A 364-amino-acid polypeptide reads, in one-letter code: Protein MGF 360-21R (364 aa).

This sequence belongs to the asfivirus MGF 360 family.

Its function is as follows. Plays a role in virus cell tropism, and may be required for efficient virus replication in macrophages. This chain is Protein MGF 360-21R, found in African swine fever virus (isolate Pig/Kenya/KEN-50/1950) (ASFV).